A 354-amino-acid polypeptide reads, in one-letter code: MTELKNDRYLRALLRQPVDVTPVWMMRQAGRYLPEYKATRAQAGDFMSLCKNAELACEVTLQPLRRYPLDAAILFSDILTVPDAMGLGLYFEAGEGPRFTSPVTCKADVDKLPIPDPEDELGYVMNAVRTIRHELKGEVPLIGFSGSPWTLATYMVEGGSSKAFTVIKKMMYADPQALHALLDKLAKSVTLYLNAQIKAGAQAVMIFDTWGGVLTGRDYQQFSLYYMHKIVDGLLRENDGRRVPVTLFTKGGGQWLEAMAETGCDALGLDWTTDIADARRRVGNKVALQGNMDPSMLYAPPARIEEEVATILAGFGHGEGHVFNLGHGIHQDVPPEHAGVFVEAVHRLSEQYHR.

Residues 27 to 31 (RQAGR), D77, Y154, T209, and H327 each bind substrate.

The protein belongs to the uroporphyrinogen decarboxylase family. As to quaternary structure, homodimer.

It localises to the cytoplasm. The enzyme catalyses uroporphyrinogen III + 4 H(+) = coproporphyrinogen III + 4 CO2. It functions in the pathway porphyrin-containing compound metabolism; protoporphyrin-IX biosynthesis; coproporphyrinogen-III from 5-aminolevulinate: step 4/4. Catalyzes the decarboxylation of four acetate groups of uroporphyrinogen-III to yield coproporphyrinogen-III. The protein is Uroporphyrinogen decarboxylase of Shigella flexneri serotype 5b (strain 8401).